Here is a 430-residue protein sequence, read N- to C-terminus: Gamma-glutamyl phosphate reductase (430 aa).

The protein belongs to the gamma-glutamyl phosphate reductase family.

Its subcellular location is the cytoplasm. The catalysed reaction is L-glutamate 5-semialdehyde + phosphate + NADP(+) = L-glutamyl 5-phosphate + NADPH + H(+). The protein operates within amino-acid biosynthesis; L-proline biosynthesis; L-glutamate 5-semialdehyde from L-glutamate: step 2/2. Catalyzes the NADPH-dependent reduction of L-glutamate 5-phosphate into L-glutamate 5-semialdehyde and phosphate. The product spontaneously undergoes cyclization to form 1-pyrroline-5-carboxylate. This chain is Gamma-glutamyl phosphate reductase, found in Rhodopseudomonas palustris (strain TIE-1).